Consider the following 460-residue polypeptide: Armadillo repeat-containing protein LFR (460 aa).

A disordered region spans residues 1–30 (MQKRELGKSGGNSGGSSGPPAKRGRPFGST). The segment covering 8 to 17 (KSGGNSGGSS) has biased composition (gly residues). 3 ARM repeats span residues 227-269 (DNEV…NLAH), 323-362 (NEPF…NLVE), and 366-407 (DCRL…NLVS).

Interacts with AS2. In terms of tissue distribution, expressed in roots, leaves, stems and flowers.

The protein resides in the nucleus. In terms of biological role, involved in leaf and flower development. Plays roles in leaf development partly by associating with AS2 and repressing KNAT1/BP transcription. Required for the formation of anther cell layers and normal expression of genes that regulates anther development. This Arabidopsis thaliana (Mouse-ear cress) protein is Armadillo repeat-containing protein LFR.